A 173-amino-acid polypeptide reads, in one-letter code: Lactoylglutathione lyase (173 aa).

The 147-residue stretch at 24–170 folds into the VOC domain; that stretch reads VFNHTMLRVK…DGYWVEVIQP (147 aa). His-27 is a Ni(2+) binding site. Arg-31 serves as a coordination point for substrate. Ni(2+) is bound at residue Glu-93. 3 residues coordinate substrate: Asn-97, Arg-116, and His-120. 2 residues coordinate Ni(2+): His-120 and Glu-166. The Proton donor/acceptor role is filled by Glu-166.

The protein belongs to the glyoxalase I family. As to quaternary structure, monomer. The cofactor is Ni(2+). Requires Zn(2+) as cofactor.

The catalysed reaction is (R)-S-lactoylglutathione = methylglyoxal + glutathione. It participates in secondary metabolite metabolism; methylglyoxal degradation; (R)-lactate from methylglyoxal: step 1/2. Functionally, catalyzes the conversion of hemimercaptal, formed from methylglyoxal and glutathione, to S-lactoylglutathione. This is Lactoylglutathione lyase (gloA) from Pseudomonas putida (Arthrobacter siderocapsulatus).